Consider the following 546-residue polypeptide: Chaperonin GroEL (546 aa).

Residues 30–33 (TLGP), lysine 51, 87–91 (DGTTT), glycine 415, and aspartate 495 each bind ATP.

Belongs to the chaperonin (HSP60) family. Forms a cylinder of 14 subunits composed of two heptameric rings stacked back-to-back. Interacts with the co-chaperonin GroES.

Its subcellular location is the cytoplasm. The enzyme catalyses ATP + H2O + a folded polypeptide = ADP + phosphate + an unfolded polypeptide.. Its function is as follows. Together with its co-chaperonin GroES, plays an essential role in assisting protein folding. The GroEL-GroES system forms a nano-cage that allows encapsulation of the non-native substrate proteins and provides a physical environment optimized to promote and accelerate protein folding. The chain is Chaperonin GroEL from Brucella melitensis biotype 2 (strain ATCC 23457).